The following is a 312-amino-acid chain: Bifunctional pinoresinol-lariciresinol reductase (312 aa).

NADP(+)-binding positions include 10-16, arginine 35, and lysine 44; that span reads GGTGYIG. Lysine 136 acts as the Proton acceptor in catalysis. Arginine 140 is an NADP(+) binding site. Position 268 (histidine 268) interacts with substrate.

The protein belongs to the NmrA-type oxidoreductase family. Isoflavone reductase subfamily. As to quaternary structure, dimer. Expressed in seed coats, but not in embryos, leaves, stems and roots.

Reductase involved in lignan biosynthesis. Catalyzes the sequential conversion of pinoresinol into lariciresinol and of lariciresinol into secoisolariciresinol. Abstracts the 4R-hydride from the NADPH cofactor during catalysis. This is Bifunctional pinoresinol-lariciresinol reductase from Linum usitatissimum (Flax).